A 207-amino-acid chain; its full sequence is Protein-L-isoaspartate O-methyltransferase (207 aa).

Residue Ser56 is part of the active site.

It belongs to the methyltransferase superfamily. L-isoaspartyl/D-aspartyl protein methyltransferase family.

The protein resides in the cytoplasm. The enzyme catalyses [protein]-L-isoaspartate + S-adenosyl-L-methionine = [protein]-L-isoaspartate alpha-methyl ester + S-adenosyl-L-homocysteine. In terms of biological role, catalyzes the methyl esterification of L-isoaspartyl residues in peptides and proteins that result from spontaneous decomposition of normal L-aspartyl and L-asparaginyl residues. It plays a role in the repair and/or degradation of damaged proteins. The protein is Protein-L-isoaspartate O-methyltransferase of Pyrobaculum neutrophilum (strain DSM 2338 / JCM 9278 / NBRC 100436 / V24Sta) (Thermoproteus neutrophilus).